We begin with the raw amino-acid sequence, 100 residues long: MKYVALAFVLSLVILQISAQVGAAYIPGMGSIGSVGRAGAAAGASAGIGNQGRGAGLLRFFTLILENLMKNNQQAQPKQDNFGAQLQNLLKKKMILEMIN.

The first 23 residues, 1–23, serve as a signal peptide directing secretion; sequence MKYVALAFVLSLVILQISAQVGA.

In terms of tissue distribution, nacreous layer of shell (at protein level). Expressed primarily in the mantle with highest level in the mantle pallium and lower level in the mantle edge.

It localises to the secreted. This is an uncharacterized protein from Margaritifera margaritifera (Freshwater pearl mussel).